A 25-amino-acid chain; its full sequence is Glucomannokinase (25 aa).

It belongs to the ROK (NagC/XylR) family. In terms of assembly, homodimer.

The enzyme catalyses D-glucose + ATP = D-glucose 6-phosphate + ADP + H(+). It carries out the reaction D-mannose + ATP = D-mannose 6-phosphate + ADP + H(+). The protein operates within carbohydrate degradation; glycolysis; D-glyceraldehyde 3-phosphate and glycerone phosphate from D-glucose: step 1/4. It participates in carbohydrate metabolism; mannose metabolism. Competitively inhibited by 2-deoxy-glucose. In terms of biological role, the enzyme has great affinity for glucose and mannose. In Segatella bryantii (Prevotella bryantii), this protein is Glucomannokinase.